The primary structure comprises 428 residues: 3-phosphoshikimate 1-carboxyvinyltransferase (428 aa).

K21, S22, and R26 together coordinate 3-phosphoshikimate. K21 provides a ligand contact to phosphoenolpyruvate. Positions 94 and 122 each coordinate phosphoenolpyruvate. Positions 166, 167, 168, 194, 306, and 333 each coordinate 3-phosphoshikimate. Q168 provides a ligand contact to phosphoenolpyruvate. D306 (proton acceptor) is an active-site residue. The phosphoenolpyruvate site is built by R337, R379, and K405.

It belongs to the EPSP synthase family. In terms of assembly, monomer.

It is found in the cytoplasm. It carries out the reaction 3-phosphoshikimate + phosphoenolpyruvate = 5-O-(1-carboxyvinyl)-3-phosphoshikimate + phosphate. The protein operates within metabolic intermediate biosynthesis; chorismate biosynthesis; chorismate from D-erythrose 4-phosphate and phosphoenolpyruvate: step 6/7. In terms of biological role, catalyzes the transfer of the enolpyruvyl moiety of phosphoenolpyruvate (PEP) to the 5-hydroxyl of shikimate-3-phosphate (S3P) to produce enolpyruvyl shikimate-3-phosphate and inorganic phosphate. The sequence is that of 3-phosphoshikimate 1-carboxyvinyltransferase from Clostridium acetobutylicum (strain ATCC 824 / DSM 792 / JCM 1419 / IAM 19013 / LMG 5710 / NBRC 13948 / NRRL B-527 / VKM B-1787 / 2291 / W).